Reading from the N-terminus, the 380-residue chain is MTGFRVGVGDGIPAARPAAETMTRANYLGAVANRVDSFWVPDHLNQLFPRSLWKQKYCGATKLIPRVDAVMEPWTMLGHIAARNRAGRLRLGVAVTDSGRRNPAVTAQAAATLHLLTRGRAILGIGPGEREGNEPYGVDWSKPVARFEEAMATIRALWDSGGELVNRDSPFFPLRKAIFDLPPYRGKWPEIWIAAHGPRMLRAAGRYADAYFPSFAHLPTEYAQRLDSVRSAASDVGRDPMAILPAVQMFVVTGSTRDDVDEALDSELLRAFGLNASDDVFTRHGGRHPMGAGFSGAQDLLPHDMDEQTALSHVAVIPPGVTREFLLNGTSDEVIQQAAQWRDCVRYMVLVNVSFLQRNLRKGLMSVKPFNKIVRELKKL.

This sequence belongs to the mer family. Phthiodiolone/phenolphthiodiolone dimycocerosates ketoreductase subfamily.

Its function is as follows. Catalyzes the reduction of the keto moiety of phthiodiolone dimycocerosates (DIM B) and glycosylated phenolphthiodiolone dimycocerosates to form the intermediate compounds phthiotriol and glycosylated phenolphthiotriol dimycocerosates during phthiocerol dimycocerosates (DIM A) and glycosylated phenolphthiocerol dimycocerosates (PGL) biosynthesis. The protein is Phthiodiolone/phenolphthiodiolone dimycocerosates ketoreductase of Mycobacterium sp. (strain JLS).